Consider the following 576-residue polypeptide: Sulfite reductase [NADPH] hemoprotein beta-component (576 aa).

C434, C440, C479, and C483 together coordinate [4Fe-4S] cluster. Residue C483 participates in siroheme binding.

This sequence belongs to the nitrite and sulfite reductase 4Fe-4S domain family. As to quaternary structure, alpha(8)-beta(8). The alpha component is a flavoprotein, the beta component is a hemoprotein. It depends on siroheme as a cofactor. Requires [4Fe-4S] cluster as cofactor.

It carries out the reaction hydrogen sulfide + 3 NADP(+) + 3 H2O = sulfite + 3 NADPH + 4 H(+). It functions in the pathway sulfur metabolism; hydrogen sulfide biosynthesis; hydrogen sulfide from sulfite (NADPH route): step 1/1. Its function is as follows. Component of the sulfite reductase complex that catalyzes the 6-electron reduction of sulfite to sulfide. This is one of several activities required for the biosynthesis of L-cysteine from sulfate. This Oceanobacillus iheyensis (strain DSM 14371 / CIP 107618 / JCM 11309 / KCTC 3954 / HTE831) protein is Sulfite reductase [NADPH] hemoprotein beta-component.